The following is a 153-amino-acid chain: NADPH-dependent 7-cyano-7-deazaguanine reductase (153 aa).

The span at M1 to P17 shows a compositional bias: polar residues. The segment at M1–A23 is disordered. The Thioimide intermediate role is filled by C51. D58 (proton donor) is an active-site residue. Substrate is bound by residues V73–S75 and H92–E93.

The protein belongs to the GTP cyclohydrolase I family. QueF type 1 subfamily.

The protein resides in the cytoplasm. It carries out the reaction 7-aminomethyl-7-carbaguanine + 2 NADP(+) = 7-cyano-7-deazaguanine + 2 NADPH + 3 H(+). Its pathway is tRNA modification; tRNA-queuosine biosynthesis. Functionally, catalyzes the NADPH-dependent reduction of 7-cyano-7-deazaguanine (preQ0) to 7-aminomethyl-7-deazaguanine (preQ1). The sequence is that of NADPH-dependent 7-cyano-7-deazaguanine reductase from Chelativorans sp. (strain BNC1).